Consider the following 591-residue polypeptide: L-fucose isomerase (591 aa).

Residues Glu337 and Asp361 each act as proton acceptor in the active site. Positions 337, 361, and 528 each coordinate Mn(2+).

It belongs to the L-fucose isomerase family. Homohexamer. Mn(2+) serves as cofactor.

It is found in the cytoplasm. It carries out the reaction L-fucose = L-fuculose. The protein operates within carbohydrate degradation; L-fucose degradation; L-lactaldehyde and glycerone phosphate from L-fucose: step 1/3. Converts the aldose L-fucose into the corresponding ketose L-fuculose. The chain is L-fucose isomerase from Salmonella paratyphi B (strain ATCC BAA-1250 / SPB7).